The primary structure comprises 393 residues: Phosphopentomutase (393 aa).

Residues Asp-11, Asp-282, His-287, Asp-323, His-324, and His-335 each coordinate Mn(2+).

Belongs to the phosphopentomutase family. It depends on Mn(2+) as a cofactor.

The protein resides in the cytoplasm. The catalysed reaction is 2-deoxy-alpha-D-ribose 1-phosphate = 2-deoxy-D-ribose 5-phosphate. It catalyses the reaction alpha-D-ribose 1-phosphate = D-ribose 5-phosphate. It functions in the pathway carbohydrate degradation; 2-deoxy-D-ribose 1-phosphate degradation; D-glyceraldehyde 3-phosphate and acetaldehyde from 2-deoxy-alpha-D-ribose 1-phosphate: step 1/2. In terms of biological role, isomerase that catalyzes the conversion of deoxy-ribose 1-phosphate (dRib-1-P) and ribose 1-phosphate (Rib-1-P) to deoxy-ribose 5-phosphate (dRib-5-P) and ribose 5-phosphate (Rib-5-P), respectively. The polypeptide is Phosphopentomutase (Caldanaerobacter subterraneus subsp. tengcongensis (strain DSM 15242 / JCM 11007 / NBRC 100824 / MB4) (Thermoanaerobacter tengcongensis)).